The primary structure comprises 800 residues: Protein translocase subunit SecA (800 aa).

Residues glutamine 85, 103-107, and aspartate 504 each bind ATP; that span reads GEGKT.

The protein belongs to the SecA family. In terms of assembly, monomer and homodimer. Part of the essential Sec protein translocation apparatus which comprises SecA, SecYEG and auxiliary proteins SecDF. Other proteins may also be involved.

The protein resides in the cell membrane. The protein localises to the cytoplasm. The catalysed reaction is ATP + H2O + cellular proteinSide 1 = ADP + phosphate + cellular proteinSide 2.. Part of the Sec protein translocase complex. Interacts with the SecYEG preprotein conducting channel. Has a central role in coupling the hydrolysis of ATP to the transfer of proteins into and across the cell membrane, serving as an ATP-driven molecular motor driving the stepwise translocation of polypeptide chains across the membrane. In Lactobacillus delbrueckii subsp. bulgaricus (strain ATCC 11842 / DSM 20081 / BCRC 10696 / JCM 1002 / NBRC 13953 / NCIMB 11778 / NCTC 12712 / WDCM 00102 / Lb 14), this protein is Protein translocase subunit SecA.